A 255-amino-acid polypeptide reads, in one-letter code: Hydroxyacylglutathione hydrolase (255 aa).

7 residues coordinate Zn(2+): H56, H58, D60, H61, H114, D133, and H171.

Belongs to the metallo-beta-lactamase superfamily. Glyoxalase II family. Monomer. It depends on Zn(2+) as a cofactor.

The enzyme catalyses an S-(2-hydroxyacyl)glutathione + H2O = a 2-hydroxy carboxylate + glutathione + H(+). The protein operates within secondary metabolite metabolism; methylglyoxal degradation; (R)-lactate from methylglyoxal: step 2/2. In terms of biological role, thiolesterase that catalyzes the hydrolysis of S-D-lactoyl-glutathione to form glutathione and D-lactic acid. The polypeptide is Hydroxyacylglutathione hydrolase (Rhodopseudomonas palustris (strain BisB18)).